Consider the following 24-residue polypeptide: Ascaphin-2 (24 aa).

In terms of tissue distribution, expressed by the skin glands.

The protein localises to the secreted. Functionally, antimicrobial peptide that shows higher potency against Gram-negative bacteria than against Gram-positive bacteria. Has a very week hemolytic activity. This Ascaphus truei (Coastal tailed frog) protein is Ascaphin-2.